The sequence spans 238 residues: Sugar fermentation stimulation protein homolog (238 aa).

Belongs to the SfsA family.

The sequence is that of Sugar fermentation stimulation protein homolog from Vibrio parahaemolyticus serotype O3:K6 (strain RIMD 2210633).